We begin with the raw amino-acid sequence, 263 residues long: Shikimate dehydrogenase (NADP(+)) (263 aa).

Residues 16–18 (SKS) and Thr-65 contribute to the shikimate site. The Proton acceptor role is filled by Lys-69. Residues Asn-90 and Asp-105 each contribute to the shikimate site. NADP(+) is bound by residues 125 to 129 (GSGGS) and Leu-208. Residue Tyr-210 participates in shikimate binding. Residue Gly-230 participates in NADP(+) binding.

It belongs to the shikimate dehydrogenase family. As to quaternary structure, homodimer.

The catalysed reaction is shikimate + NADP(+) = 3-dehydroshikimate + NADPH + H(+). It functions in the pathway metabolic intermediate biosynthesis; chorismate biosynthesis; chorismate from D-erythrose 4-phosphate and phosphoenolpyruvate: step 4/7. Its function is as follows. Involved in the biosynthesis of the chorismate, which leads to the biosynthesis of aromatic amino acids. Catalyzes the reversible NADPH linked reduction of 3-dehydroshikimate (DHSA) to yield shikimate (SA). The protein is Shikimate dehydrogenase (NADP(+)) of Helicobacter acinonychis (strain Sheeba).